The chain runs to 840 residues: DNA gyrase subunit A (840 aa).

The Topo IIA-type catalytic domain occupies 51-516; that stretch reads LPDVRDGFKP…VSSHIDDEDL (466 aa). Tyrosine 139 functions as the O-(5'-phospho-DNA)-tyrosine intermediate in the catalytic mechanism. The GyrA-box motif lies at 543–549; sequence QRRGGVG.

It belongs to the type II topoisomerase GyrA/ParC subunit family. As to quaternary structure, heterotetramer, composed of two GyrA and two GyrB chains. In the heterotetramer, GyrA contains the active site tyrosine that forms a transient covalent intermediate with DNA, while GyrB binds cofactors and catalyzes ATP hydrolysis.

The protein resides in the cytoplasm. It catalyses the reaction ATP-dependent breakage, passage and rejoining of double-stranded DNA.. Functionally, a type II topoisomerase that negatively supercoils closed circular double-stranded (ds) DNA in an ATP-dependent manner to modulate DNA topology and maintain chromosomes in an underwound state. Negative supercoiling favors strand separation, and DNA replication, transcription, recombination and repair, all of which involve strand separation. Also able to catalyze the interconversion of other topological isomers of dsDNA rings, including catenanes and knotted rings. Type II topoisomerases break and join 2 DNA strands simultaneously in an ATP-dependent manner. The polypeptide is DNA gyrase subunit A (Ureaplasma parvum serovar 3 (strain ATCC 700970)).